The chain runs to 800 residues: MEIHVTYNTTLICLSILIACTASYISLELSRKVTINTGLKSKIWLIGGSLIMGFGIWSMHFVGMMAVHMEMPMEYEFMPLMAAIGASVSGSFVSLYFVSRHILTYYRLLTGSVVLGASIASMHYIGMSAISRVMIIYEPILFTVSIIIAIAASFVSLKIFFDLAVKKHSEHLIFYKGVSSIVMGIGISGMHYTGMLAATFHKDMAPPGSHMEVQTFHWSIFVTLIIFCIQTLLLFSSHADRKFIKQSERIKDNEQRFQSLIVHNIDAIFILSLEGDIISSNHAGEEMISKFGFSMHDWRNYTSLKVKRLFEQVKKDKQAMNSDSDLITEKGQFHLNITLIPVEVNQELDSIYVICKDMTKQYKAEKEIHRMAHYDSLTDLPNRRHAISHLTKVLNREHSLHYNTVVFFLDLNRFKVINDALGHNVGDQLLQFAAKRLSSVVPDNGFIARLGGDEFIIILTDANTGTGEADVLARKIIQKFKKPFKIQDHTLVTSVSIGIAISPKDGTDGLELMKKADMAMYAAKERNKSKYRYYSFSIGNKETVKLNQEMVLREAIENDRFVLHYQPQFSVKKQKMTGAEALIRLVTPDGQLRPPGEFIGVAEETGLIIDIGKWIIDEACKQARIWHDKGYDLSVAINISARQFQSKDLIPLIKDTLNKYQLPPQLLEVEVTESMTMDNLNHSKKVLSSLTELGIRISIDDFGTGHSSLSYLKDFPIHRLKIDKSFIDDIQTHPKSEQITGAIIAMGHQLSLQVIAEGVENAAQKQLLFEKGCDHLQGFFFSRPIPPEQFEQFIIEQPSQ.

The next 7 membrane-spanning stretches (helical) occupy residues 5 to 27, 44 to 66, 76 to 98, 103 to 125, 135 to 157, 178 to 200, and 215 to 237; these read VTYNTTLICLSILIACTASYISL, WLIGGSLIMGFGIWSMHFVGMMA, EFMPLMAAIGASVSGSFVSLYFV, LTYYRLLTGSVVLGASIASMHYI, IIYEPILFTVSIIIAIAASFVSL, VSSIVMGIGISGMHYTGMLAATF, and TFHWSIFVTLIIFCIQTLLLFSS. An MHYT domain is found at 7–201; sequence YNTTLICLSI…YTGMLAATFH (195 aa). The region spanning 255–319 is the PAS domain; it reads QRFQSLIVHN…FEQVKKDKQA (65 aa). The GGDEF domain occupies 402-536; sequence YNTVVFFLDL…NKSKYRYYSF (135 aa). Residues 545–798 enclose the EAL domain; that stretch reads KLNQEMVLRE…QFEQFIIEQP (254 aa).

It is found in the cell membrane. Functionally, probable signaling protein whose physiological role is not yet known. The sequence is that of Signaling protein YkoW (ykoW) from Bacillus subtilis (strain 168).